A 104-amino-acid polypeptide reads, in one-letter code: MSSVPASAYLTLAIILFCIGLFGALTKRNTVIVLVCIELMLNAANLNFVAFSKLGLFPNLTGQIFSLFTMAVAAAEAAVGLAILIALYRNRTTVHVDEMDTLKG.

Transmembrane regions (helical) follow at residues 4-24, 31-51, and 67-87; these read VPAS…LFGA, VIVL…FVAF, and LFTM…LIAL.

This sequence belongs to the complex I subunit 4L family. In terms of assembly, NDH-1 is composed of 14 different subunits. Subunits NuoA, H, J, K, L, M, N constitute the membrane sector of the complex.

The protein resides in the cell membrane. The catalysed reaction is a quinone + NADH + 5 H(+)(in) = a quinol + NAD(+) + 4 H(+)(out). Functionally, NDH-1 shuttles electrons from NADH, via FMN and iron-sulfur (Fe-S) centers, to quinones in the respiratory chain. The immediate electron acceptor for the enzyme in this species is believed to be a menaquinone. Couples the redox reaction to proton translocation (for every two electrons transferred, four hydrogen ions are translocated across the cytoplasmic membrane), and thus conserves the redox energy in a proton gradient. This chain is NADH-quinone oxidoreductase subunit K, found in Bacillus anthracis (strain A0248).